Consider the following 131-residue polypeptide: Protein FON2 SPARE1 (131 aa).

Positions 1 to 22 (MSRRLGAAAAVLLLWLAVLTFA) are cleaved as a signal peptide. The disordered stretch occupies residues 67–131 (SPSSLTTTDR…VPTGPNPLHH (65 aa)). The segment covering 76 to 97 (RHHHHHRHHGHHHHRGHDRWNR) has biased composition (basic residues).

The protein belongs to the CLV3/ESR signal peptide family. In terms of tissue distribution, expressed in all aerial apical meristems, including the floral and inflorescence meristems in the reproductive phase and the shoot apical meristem in the vegetative phase. Also detected in the primordia of lateral organs such as the leaf and the floral organs.

It localises to the secreted. Its function is as follows. Involved in the maintenance of the floral meristem and of the shoot apical meristem in the vegetative phase. Suppresses the fon2 mutation and acts independently of FON1. In Oryza sativa subsp. japonica, the protein has a single amino acid substitution at the putative processing site of the signal peptide and is inactive. In Oryza sativa subsp. indica (Rice), this protein is Protein FON2 SPARE1 (FOS1).